A 397-amino-acid polypeptide reads, in one-letter code: Serpin B10 (397 aa).

The Nuclear localization signal signature appears at Lys74–Lys77.

The protein belongs to the serpin family. Ov-serpin subfamily.

It localises to the nucleus. It is found in the cytoplasm. Protease inhibitor that may play a role in the regulation of protease activities during hematopoiesis and apoptosis induced by TNF. May regulate protease activities in the cytoplasm and in the nucleus. This chain is Serpin B10 (SERPINB10), found in Rhinolophus ferrumequinum (Greater horseshoe bat).